Reading from the N-terminus, the 139-residue chain is Nucleoside diphosphate kinase (139 aa).

ATP-binding residues include Lys10, Phe58, Arg86, Thr92, Arg104, and Asn114. The Pros-phosphohistidine intermediate role is filled by His117.

The protein belongs to the NDK family. As to quaternary structure, homotetramer. Mg(2+) serves as cofactor.

The protein resides in the cytoplasm. The catalysed reaction is a 2'-deoxyribonucleoside 5'-diphosphate + ATP = a 2'-deoxyribonucleoside 5'-triphosphate + ADP. The enzyme catalyses a ribonucleoside 5'-diphosphate + ATP = a ribonucleoside 5'-triphosphate + ADP. In terms of biological role, major role in the synthesis of nucleoside triphosphates other than ATP. The ATP gamma phosphate is transferred to the NDP beta phosphate via a ping-pong mechanism, using a phosphorylated active-site intermediate. In Rhodococcus erythropolis (strain PR4 / NBRC 100887), this protein is Nucleoside diphosphate kinase.